A 349-amino-acid polypeptide reads, in one-letter code: D-alanine--D-alanine ligase (349 aa).

Positions 132–335 constitute an ATP-grasp domain; that stretch reads KHVFEAVGVP…YSDLIEKLVD (204 aa). Residue 162–217 coordinates ATP; the sequence is VEKLEFPVFVKPANMGSSVGISKVDDLADLQPALSEAYKYDNRVVIEQGVDAREIE. The Mg(2+) site is built by Asp-289, Glu-302, and Asn-304.

It belongs to the D-alanine--D-alanine ligase family. It depends on Mg(2+) as a cofactor. Mn(2+) serves as cofactor.

The protein resides in the cytoplasm. It carries out the reaction 2 D-alanine + ATP = D-alanyl-D-alanine + ADP + phosphate + H(+). It functions in the pathway cell wall biogenesis; peptidoglycan biosynthesis. Cell wall formation. The chain is D-alanine--D-alanine ligase from Lactococcus lactis subsp. cremoris (strain SK11).